A 256-amino-acid chain; its full sequence is Ubiquinone/menaquinone biosynthesis C-methyltransferase UbiE (256 aa).

S-adenosyl-L-methionine is bound by residues threonine 79, aspartate 100, and 128 to 129 (DA).

This sequence belongs to the class I-like SAM-binding methyltransferase superfamily. MenG/UbiE family.

The catalysed reaction is a 2-demethylmenaquinol + S-adenosyl-L-methionine = a menaquinol + S-adenosyl-L-homocysteine + H(+). It catalyses the reaction a 2-methoxy-6-(all-trans-polyprenyl)benzene-1,4-diol + S-adenosyl-L-methionine = a 5-methoxy-2-methyl-3-(all-trans-polyprenyl)benzene-1,4-diol + S-adenosyl-L-homocysteine + H(+). Its pathway is quinol/quinone metabolism; menaquinone biosynthesis; menaquinol from 1,4-dihydroxy-2-naphthoate: step 2/2. The protein operates within cofactor biosynthesis; ubiquinone biosynthesis. Methyltransferase required for the conversion of demethylmenaquinol (DMKH2) to menaquinol (MKH2) and the conversion of 2-polyprenyl-6-methoxy-1,4-benzoquinol (DDMQH2) to 2-polyprenyl-3-methyl-6-methoxy-1,4-benzoquinol (DMQH2). This Stutzerimonas stutzeri (strain A1501) (Pseudomonas stutzeri) protein is Ubiquinone/menaquinone biosynthesis C-methyltransferase UbiE.